We begin with the raw amino-acid sequence, 283 residues long: Putative ABC transporter ATP-binding protein MA_4342 (283 aa).

The region spanning 3 to 238 is the ABC transporter domain; sequence IILENVSFFY…KNVPLPPVTS (236 aa). 40-47 is a binding site for ATP; it reads GEKGAGKS.

Belongs to the ABC transporter superfamily.

The protein resides in the cell membrane. Its function is as follows. Probably part of an ABC transporter complex. Responsible for energy coupling to the transport system. This chain is Putative ABC transporter ATP-binding protein MA_4342, found in Methanosarcina acetivorans (strain ATCC 35395 / DSM 2834 / JCM 12185 / C2A).